We begin with the raw amino-acid sequence, 1025 residues long: Probable outer membrane protein PmpF (1025 aa).

Positions 1–20 (MTRRILPLSLVFIPLSCISA) are cleaved as a signal peptide. The disordered stretch occupies residues 654–681 (NSTETQTANNSIQEQKNTSETFDSNSTT). The span at 659–681 (QTANNSIQEQKNTSETFDSNSTT) shows a compositional bias: polar residues. The Autotransporter domain occupies 748–1025 (LLPDDSWFAL…YMNAGGALVF (278 aa)).

It belongs to the PMP outer membrane protein family.

Its subcellular location is the secreted. It is found in the cell wall. It localises to the cell outer membrane. The protein is Probable outer membrane protein PmpF (pmpF) of Chlamydia muridarum (strain MoPn / Nigg).